The sequence spans 143 residues: Small ribosomal subunit protein uS9A (143 aa).

At Ser2 the chain carries N-acetylserine. Lys30 is covalently cross-linked (Glycyl lysine isopeptide (Lys-Gly) (interchain with G-Cter in ubiquitin)). Phosphoserine is present on Ser34. Glycyl lysine isopeptide (Lys-Gly) (interchain with G-Cter in ubiquitin) cross-links involve residues Lys47 and Lys59. A Phosphoserine modification is found at Ser61. Thr70 is modified (phosphothreonine). A Phosphoserine modification is found at Ser76. Residues 123–143 form a disordered region; the sequence is RPEPKKFGGKGARSRFQKSYR. Residues 134-143 show a composition bias toward basic residues; it reads ARSRFQKSYR.

It belongs to the universal ribosomal protein uS9 family. In terms of assembly, component of the small ribosomal subunit (SSU). Mature yeast ribosomes consist of a small (40S) and a large (60S) subunit. The 40S small subunit contains 1 molecule of ribosomal RNA (18S rRNA) and 33 different proteins (encoded by 57 genes). The large 60S subunit contains 3 rRNA molecules (25S, 5.8S and 5S rRNA) and 46 different proteins (encoded by 81 genes).

It localises to the cytoplasm. Component of the ribosome, a large ribonucleoprotein complex responsible for the synthesis of proteins in the cell. The small ribosomal subunit (SSU) binds messenger RNAs (mRNAs) and translates the encoded message by selecting cognate aminoacyl-transfer RNA (tRNA) molecules. The large subunit (LSU) contains the ribosomal catalytic site termed the peptidyl transferase center (PTC), which catalyzes the formation of peptide bonds, thereby polymerizing the amino acids delivered by tRNAs into a polypeptide chain. The nascent polypeptides leave the ribosome through a tunnel in the LSU and interact with protein factors that function in enzymatic processing, targeting, and the membrane insertion of nascent chains at the exit of the ribosomal tunnel. In Saccharomyces cerevisiae (strain ATCC 204508 / S288c) (Baker's yeast), this protein is Small ribosomal subunit protein uS9A.